A 1742-amino-acid chain; its full sequence is NACHT and WD repeat domain-containing protein 2 (1742 aa).

5 LRR repeats span residues 386-410 (FYEY…GHIN), 677-698 (LEDV…TRPS), 724-747 (VKNV…LYLQ), 883-906 (YSQE…VIAF), and 925-953 (LPKL…SSMD). The NACHT domain maps to 410 to 737 (NPLVVYGGPC…TLLVWANRHL (328 aa)). WD repeat units lie at residues 963 to 1004 (LASS…LLRQ), 1007 to 1046 (TAQS…LLSE), 1140 to 1179 (FSGG…NPQL), 1229 to 1271 (RHNE…ASLQ), 1272 to 1311 (ESSG…AMSN), 1314 to 1353 (KTGK…IEAV), 1355 to 1394 (KHEG…NLFR), 1396 to 1434 (NGQR…RVCN), 1476 to 1516 (EDGI…ICRR), 1522 to 1561 (NFLK…LRVV), and 1614 to 1653 (SLYK…DAAL). A disordered region spans residues 1702 to 1721 (PITVSDSSESNEATPSKKHN). The span at 1703 to 1715 (ITVSDSSESNEAT) shows a compositional bias: polar residues.

This Mus musculus (Mouse) protein is NACHT and WD repeat domain-containing protein 2 (Nwd2).